A 322-amino-acid chain; its full sequence is uncharacterized protein (322 aa).

Disordered regions lie at residues 1–51 and 107–130; these read MARS…GAWA and QERQNVEGGPEGLHLEPGNEDRPD. A compositionally biased stretch (basic and acidic residues) spans 119-130; sequence LHLEPGNEDRPD.

Expressed in skin and fetal lung.

This is an uncharacterized protein from Homo sapiens (Human).